Consider the following 610-residue polypeptide: MTAADIDSKKRKRKHKAKKGEEAEPVKAHTNGAAAVEKPRKKSKKEHTPEPEVEDVVADASENDVESGAEEDEEQVNAELKEIAAKAKKAKKAKAAQDEDEDEDAAGSGANALAVADLPSGTSIPTVDDPTRFDELNLSERTMEAIKTMGFESMTEIQRKAIPPLLSGKDVLGAAKTGSGKTLAFLIPAIEMLSSMRFKPRNGTGVIVVSPTRELALQIFGVARELMEKHSQTFGIVIGGANRRAEAEKLAKGVNLLIATPGRLLDHLHNTQGFVFKNLKSLIIDEADRILEVGFEDEMRSIIKILPTDRQTMLFSATQTTKVEDLARISLKAGPLYINVDYRKEHSTVEGLEQGYVICDSDTRFRLLFSFLKKHQKKKVIVFFSSCNSVKFYAELLNYIDLPVLELHGKLKQQARTNRFFEFCNAQSGTLICTDVAARGLDIPEVDWVIQFDPPDDPRDYIHRVGRTARGSEGKGRSLMFLLPSEIGFLKLLKEARVPLVEFELPANKILNIQSQLEALITKNYYLNKSAKDGYRSYLQAYASHSLRSVFDVHKLDLVKVAKSFGFSTPPRIDISLGASLSRDKKVEGRREYGRQPQQGRRPMKPNKRF.

Disordered regions lie at residues 1-81 and 112-131; these read MTAA…AELK and ALAV…DDPT. A compositionally biased stretch (basic residues) spans 9-18; it reads KKRKRKHKAK. The segment covering 51 to 76 has biased composition (acidic residues); that stretch reads PEVEDVVADASENDVESGAEEDEEQV. The Q motif signature appears at 131-159; it reads TRFDELNLSERTMEAIKTMGFESMTEIQR. A Helicase ATP-binding domain is found at 162-337; it reads IPPLLSGKDV…RISLKAGPLY (176 aa). 175-182 is a binding site for ATP; it reads AKTGSGKT. The DEAD box signature appears at 285 to 288; that stretch reads DEAD. The region spanning 351–521 is the Helicase C-terminal domain; the sequence is GLEQGYVICD…NIQSQLEALI (171 aa). Positions 584–594 are enriched in basic and acidic residues; sequence DKKVEGRREYG. The tract at residues 584 to 610 is disordered; that stretch reads DKKVEGRREYGRQPQQGRRPMKPNKRF.

The protein belongs to the DEAD box helicase family. DDX18/HAS1 subfamily. As to quaternary structure, associates in the nucleolus with the 60S and pre-60S ribosomal subunits.

It localises to the nucleus. Its subcellular location is the nucleolus. It carries out the reaction ATP + H2O = ADP + phosphate + H(+). In terms of biological role, ATP-dependent RNA helicase involved in 40S ribosomal subunit biogenesis. Required for the processing and cleavage of 35S pre-rRNA at sites A0, A1, and A2, leading to mature 18S rRNA. This is ATP-dependent RNA helicase HAS1 (HAS1) from Phaeosphaeria nodorum (strain SN15 / ATCC MYA-4574 / FGSC 10173) (Glume blotch fungus).